A 131-amino-acid polypeptide reads, in one-letter code: Snaclec bitiscetin subunit alpha (131 aa).

3 disulfides stabilise this stretch: C4–C15, C32–C125, and C100–C117. The C-type lectin domain occupies 11–126; it reads YKGHCYKVFK…CGEKNPFICK (116 aa).

This sequence belongs to the snaclec family. In terms of assembly, heterodimer of subunits alpha and beta; disulfide-linked. As to expression, expressed by the venom gland.

The protein resides in the secreted. Its function is as follows. Snaclec that binds to von Willebrand factor (VWF) and induces its interaction with GPIbalpha (GP1BA) (via the vWF A1 domain), resulting in platelet aggregation. The protein is Snaclec bitiscetin subunit alpha of Bitis arietans (African puff adder).